Here is a 326-residue protein sequence, read N- to C-terminus: Isoaspartyl peptidase/L-asparaginase (326 aa).

Threonine 185 acts as the Nucleophile in catalysis. Substrate-binding positions include 213-216 (RVGD) and 236-239 (TGHG).

The protein belongs to the Ntn-hydrolase family. In terms of assembly, heterodimer of an alpha and beta chain produced by autocleavage. This heterodimer may then dimerize in turn, giving rise to a heterotetramer. Post-translationally, cleaved into an alpha and beta chain by autocatalysis; this activates the enzyme. The N-terminal residue of the beta subunit is responsible for the nucleophile hydrolase activity. High expression in the heart and brain while low to minimal expression in the other tissues. In ocular tissues, high levels is observed in the optic nerve and retina while relatively low levels of expression are detected in the iris-ciliary body, lens or retinal pigment epithelium.

It localises to the cytoplasm. The enzyme catalyses L-asparagine + H2O = L-aspartate + NH4(+). It catalyses the reaction Cleavage of a beta-linked Asp residue from the N-terminus of a polypeptide.. Has both L-asparaginase and beta-aspartyl peptidase activity. May be involved in the production of L-aspartate, which can act as an excitatory neurotransmitter in some brain regions. Is highly active with L-Asp beta-methyl ester. Besides, has catalytic activity toward beta-aspartyl dipeptides and their methyl esters, including beta-L-Asp-L-Phe, beta-L-Asp-L-Phe methyl ester (aspartame), beta-L-Asp-L-Ala, beta-L-Asp-L-Leu and beta-L-Asp-L-Lys. Does not have aspartylglucosaminidase activity and is inactive toward GlcNAc-L-Asn. Likewise, has no activity toward glutamine. This is Isoaspartyl peptidase/L-asparaginase (Asrgl1) from Mus musculus (Mouse).